A 247-amino-acid chain; its full sequence is Carboxy-S-adenosyl-L-methionine synthase (247 aa).

S-adenosyl-L-methionine-binding positions include Tyr39, Gly64–Ser66, Asp89–Asn90, Asp117–Ile118, Asn132, and Arg199.

The protein belongs to the class I-like SAM-binding methyltransferase superfamily. Cx-SAM synthase family. In terms of assembly, homodimer.

It catalyses the reaction prephenate + S-adenosyl-L-methionine = carboxy-S-adenosyl-L-methionine + 3-phenylpyruvate + H2O. Functionally, catalyzes the conversion of S-adenosyl-L-methionine (SAM) to carboxy-S-adenosyl-L-methionine (Cx-SAM). The protein is Carboxy-S-adenosyl-L-methionine synthase of Pectobacterium atrosepticum (strain SCRI 1043 / ATCC BAA-672) (Erwinia carotovora subsp. atroseptica).